The chain runs to 380 residues: MAPNLRKSHPLLKMVNNSLIDLPAPSNISAWWNFGSLLGICLMTQILTGLLLAMHYTADTTLAFSSVAHTCRNVQYGWLIRNLHANGASFFFICIYLHIGRGFYYGSYLYKETWNTGVMLLLTLMATAFVGYVLPWGQMSFWGATVITNLFSAIPYIGQTLVEWAWGGFSVDNPTLTRFFALHFLLPFVIAGLTLIHLTFLHESGSNNPLGIVSNCDKIPFHPYFTLKDILGFMFMLLPLTTLALFSPNLLGDPENFTPANPLITPPHIKPEWYFLFAYAILRSIPNKLGGVLALAASVLILFLVPFLHKAKQRTMTFRPLSQLLFWVLVANLLILTWVGSQPVEHPFIIIGQLASLTYFTILLILFPTIGALENKMLNY.

4 helical membrane passes run 34 to 54 (FGSL…LLAM), 78 to 99 (WLIR…YLHI), 114 to 134 (WNTG…GYVL), and 179 to 199 (FFAL…IHLT). The heme b site is built by His-84 and His-98. Positions 183 and 197 each coordinate heme b. His-202 contributes to the a ubiquinone binding site. 4 helical membrane passes run 227 to 247 (LKDI…ALFS), 289 to 309 (LGGV…PFLH), 321 to 341 (LSQL…WVGS), and 348 to 368 (FIII…ILFP).

The protein belongs to the cytochrome b family. The cytochrome bc1 complex contains 11 subunits: 3 respiratory subunits (MT-CYB, CYC1 and UQCRFS1), 2 core proteins (UQCRC1 and UQCRC2) and 6 low-molecular weight proteins (UQCRH/QCR6, UQCRB/QCR7, UQCRQ/QCR8, UQCR10/QCR9, UQCR11/QCR10 and a cleavage product of UQCRFS1). This cytochrome bc1 complex then forms a dimer. It depends on heme b as a cofactor.

The protein resides in the mitochondrion inner membrane. Its function is as follows. Component of the ubiquinol-cytochrome c reductase complex (complex III or cytochrome b-c1 complex) that is part of the mitochondrial respiratory chain. The b-c1 complex mediates electron transfer from ubiquinol to cytochrome c. Contributes to the generation of a proton gradient across the mitochondrial membrane that is then used for ATP synthesis. The protein is Cytochrome b (MT-CYB) of Pterodroma hypoleuca (Bonin petrel).